Consider the following 987-residue polypeptide: Centrosomal protein of 120 kDa (987 aa).

The region spanning 1–112 is the C2 1 domain; the sequence is MVSKSDQLLI…QETKQAPKWY (112 aa). Residues 352–408 are disordered; it reads KTQNEHEPHHSKKRVLTPIKENTHTGPQSPSESPVPPHNQSPPTKDDATESEVESLL. In terms of domain architecture, C2 2 spans 438–567; it reads SEAASGQKIA…LSSEKTRFLG (130 aa). Residues 670-919 are a coiled coil; sequence ENQLKQKELA…RLRQQEQKQY (250 aa). Over residues 912–926 the composition is skewed to basic and acidic residues; that stretch reads RQQEQKQYPDSREIA. The interval 912-937 is disordered; it reads RQQEQKQYPDSREIASGKMDGPHGSA. The residue at position 936 (Ser936) is a Phosphoserine.

This sequence belongs to the CEP120 family. In terms of assembly, interacts with TACC2 and TACC3. Interacts with CCDC52.

It is found in the cytoplasm. The protein resides in the cytoskeleton. The protein localises to the microtubule organizing center. Its subcellular location is the centrosome. Functionally, plays a role in the microtubule-dependent coupling of the nucleus and the centrosome. Involved in the processes that regulate centrosome-mediated interkinetic nuclear migration (INM) of neural progenitors and for proper positioning of neurons during brain development. Also implicated in the migration and selfrenewal of neural progenitors. May play a role in centriole duplication during mitosis. Required for the recruitment of CEP295 to the proximal end of new-born centrioles at the centriolar microtubule wall during early S phase in a PLK4-dependent manner. The chain is Centrosomal protein of 120 kDa (CEP120) from Bos taurus (Bovine).